Here is a 547-residue protein sequence, read N- to C-terminus: Chaperonin GroEL (547 aa).

Residues 30-33, lysine 51, 87-91, glycine 415, and aspartate 496 each bind ATP; these read TLGP and DGTTT. Positions 527–547 are disordered; the sequence is SDKAEPMPMRGGMGGMGGMDF. Positions 537-547 are enriched in gly residues; sequence GGMGGMGGMDF.

Belongs to the chaperonin (HSP60) family. As to quaternary structure, forms a cylinder of 14 subunits composed of two heptameric rings stacked back-to-back. Interacts with the co-chaperonin GroES.

Its subcellular location is the cytoplasm. It catalyses the reaction ATP + H2O + a folded polypeptide = ADP + phosphate + an unfolded polypeptide.. Functionally, together with its co-chaperonin GroES, plays an essential role in assisting protein folding. The GroEL-GroES system forms a nano-cage that allows encapsulation of the non-native substrate proteins and provides a physical environment optimized to promote and accelerate protein folding. This Rickettsia rickettsii (strain Sheila Smith) protein is Chaperonin GroEL.